Consider the following 82-residue polypeptide: MAVFHDEVEIEDFQYDEDSETYFYPCPCGDNFCITKEDLENGEDVATCPSCSLIIKVIYDKDQFTCGETVPAPSTNKELVKC.

One can recognise a DPH-type MB domain in the interval 4–60; the sequence is FHDEVEIEDFQYDEDSETYFYPCPCGDNFCITKEDLENGEDVATCPSCSLIIKVIYD. Cys26, Cys28, Cys48, and Cys51 together coordinate Fe cation.

It belongs to the DPH3 family. Component of the 2-(3-amino-3-carboxypropyl)histidine synthase complex composed of DPH1, DPH2, DPH3 and a NADH-dependent reductase. Interacts with SERGEF. Fe(2+) serves as cofactor.

The protein resides in the cytoplasm. It is found in the nucleus. The enzyme catalyses [3Fe-4S](1+)-[protein] + Fe(2+)-[Dph3] = [3Fe-4S](0)-[protein] + Fe(3+)-[Dph3]. It carries out the reaction 2 [3Fe-4S](0)-[protein] + 2 Fe(2+)-[Dph3] + NADH = 2 [4Fe-4S](1+)-[protein] + 2 [Dph3] + NAD(+) + H(+). The protein operates within protein modification; peptidyl-diphthamide biosynthesis. Required for the first step of diphthamide biosynthesis, a post-translational modification of histidine which occurs in elongation factor 2. DPH1 and DPH2 transfer a 3-amino-3-carboxypropyl (ACP) group from S-adenosyl-L-methionine (SAM) to a histidine residue, the reaction is assisted by a reduction system comprising DPH3 and a NADH-dependent reductase. Acts as an electron donor to reduce the Fe-S cluster in DPH1-DPH2 keeping the [4Fe-4S] clusters in the active and reduced state. Restores iron to DPH1-DPH2 iron-sulfur clusters which have degraded from [4Fe-4S] to [3Fe-4S] by donating an iron atom to reform [4Fe-4S] clusters, in a manner dependent on the presence of elongation factor 2 and SAM. Associates with the elongator complex and is required for tRNA Wobble base modifications mediated by the elongator complex. The elongator complex is required for multiple tRNA modifications, including mcm5U (5-methoxycarbonylmethyl uridine), mcm5s 2U (5-methoxycarbonylmethyl-2-thiouridine), and ncm5U (5-carbamoylmethyl uridine). The chain is Diphthamide biosynthesis protein 3 (DPH3) from Bos taurus (Bovine).